A 446-amino-acid polypeptide reads, in one-letter code: Glucosylglycerate hydrolase (446 aa).

Substrate-binding positions include Tyr-36, 40–43 (WSWD), Tyr-88, Gln-115, and Gly-180. Catalysis depends on Asp-182, which acts as the Proton donor. Residues Arg-216 and 375-376 (YW) each bind substrate. Catalysis depends on Glu-419, which acts as the Proton acceptor. Residue Gln-434 coordinates substrate.

This sequence belongs to the glycosyl hydrolase 63 family. As to quaternary structure, homotetramer. Dimer of dimers.

The catalysed reaction is (2R)-2-O-(alpha-D-glucopyranosyl)-glycerate + H2O = (R)-glycerate + D-glucose. Activity is not dependent on divalent cations, but it is enhanced by Mg(2+). Catalyzes the hydrolysis of glucosylglycerate (GG) to glycerate and glucose. Involved in recovery from nitrogen starvation by promoting the rapid mobilization of the glucosylglycerate that accumulates under these conditions. Can also hydrolyze mannosylglycerate (MG), with tenfold lower efficiency. This chain is Glucosylglycerate hydrolase, found in Mycolicibacterium hassiacum (strain DSM 44199 / CIP 105218 / JCM 12690 / 3849) (Mycobacterium hassiacum).